A 246-amino-acid polypeptide reads, in one-letter code: Trypsin V-A (246 aa).

The signal sequence occupies residues 1–15; it reads MKICIFFTLLGTVAA. Residues 16-24 constitute a propeptide, activation peptide; that stretch reads FPTEDNDDR. The Peptidase S1 domain maps to 25–244; it reads IVGGYTCQEH…YLNWIHQTIA (220 aa). Disulfide bonds link C31-C160, C49-C65, C133-C233, C140-C206, C171-C185, and C196-C220. H64 serves as the catalytic Charge relay system. 3 residues coordinate Ca(2+): E76, N78, and E86. Residue D108 is the Charge relay system of the active site. Catalysis depends on S200, which acts as the Charge relay system.

It belongs to the peptidase S1 family. The cofactor is Ca(2+).

It is found in the secreted. The protein localises to the extracellular space. The catalysed reaction is Preferential cleavage: Arg-|-Xaa, Lys-|-Xaa.. The sequence is that of Trypsin V-A from Rattus norvegicus (Rat).